Reading from the N-terminus, the 432-residue chain is Glutamate--tRNA ligase 2 (432 aa).

The 'HIGH' region motif lies at 6 to 16 (PSPTGDMHIGN). Positions 235–239 (KMSKR) match the 'KMSKS' region motif. K238 provides a ligand contact to ATP.

This sequence belongs to the class-I aminoacyl-tRNA synthetase family. Glutamate--tRNA ligase type 1 subfamily. Monomer.

It is found in the cytoplasm. It carries out the reaction tRNA(Glu) + L-glutamate + ATP = L-glutamyl-tRNA(Glu) + AMP + diphosphate. Its function is as follows. Catalyzes the attachment of glutamate to tRNA(Glu) in a two-step reaction: glutamate is first activated by ATP to form Glu-AMP and then transferred to the acceptor end of tRNA(Glu). The chain is Glutamate--tRNA ligase 2 from Sulfurimonas denitrificans (strain ATCC 33889 / DSM 1251) (Thiomicrospira denitrificans (strain ATCC 33889 / DSM 1251)).